Here is a 61-residue protein sequence, read N- to C-terminus: Metallothionein-1 (61 aa).

Position 1 is an N-acetylmethionine (Met-1). The beta stretch occupies residues 1–29; the sequence is MDPNCSCSTGSTCTCSSSCGCKDCKCTSC. Residues Cys-5, Cys-7, Cys-13, Cys-15, Cys-19, Cys-21, Cys-24, Cys-26, Cys-29, Cys-33, Cys-34, Cys-36, Cys-37, Cys-41, Cys-44, Cys-48, Cys-50, Cys-57, Cys-59, and Cys-60 each coordinate a divalent metal cation. The segment at 30–61 is alpha; it reads KKSCCSCCPVGCSKCAQGCVCKGASDKCTCCA.

It belongs to the metallothionein superfamily. Type 1 family.

Metallothioneins have a high content of cysteine residues that bind various heavy metals; these proteins are transcriptionally regulated by both heavy metals and glucocorticoids. This chain is Metallothionein-1 (MT1), found in Cricetulus griseus (Chinese hamster).